Reading from the N-terminus, the 380-residue chain is D-threo-3-hydroxyaspartate dehydratase (380 aa).

N6-(pyridoxal phosphate)lysine is present on K43.

This sequence belongs to the DSD1 family. Monomer. Pyridoxal 5'-phosphate is required as a cofactor. Requires Mn(2+) as cofactor. It depends on Co(2+) as a cofactor. Ni(2+) serves as cofactor.

The catalysed reaction is (3R)-3-hydroxy-D-aspartate = oxaloacetate + NH4(+). Strongly inhibited by hydroxylamine. Modestly inhibited by EDTA. Functionally, catalyzes the deamination of D-threo-3-hydroxyaspartate (D-THA). Also exhibits dehydratase activity towards L-threo-3-hydroxyaspartate (L-THA), L-erythro-3-hydroxyaspartate (L-EHA) and D-serine. The sequence is that of D-threo-3-hydroxyaspartate dehydratase (dthadh) from Delftia sp. (strain HT23).